A 763-amino-acid polypeptide reads, in one-letter code: Xaa-Pro dipeptidyl-peptidase (763 aa).

Residues Ser348, Asp468, and His498 each act as charge relay system in the active site.

It belongs to the peptidase S15 family. As to quaternary structure, homodimer.

Its subcellular location is the cytoplasm. It carries out the reaction Hydrolyzes Xaa-Pro-|- bonds to release unblocked, N-terminal dipeptides from substrates including Ala-Pro-|-p-nitroanilide and (sequentially) Tyr-Pro-|-Phe-Pro-|-Gly-Pro-|-Ile.. In terms of biological role, removes N-terminal dipeptides sequentially from polypeptides having unsubstituted N-termini provided that the penultimate residue is proline. The protein is Xaa-Pro dipeptidyl-peptidase (pepX) of Lactococcus lactis subsp. cremoris (Streptococcus cremoris).